A 478-amino-acid chain; its full sequence is MATDSWALAVDEQEAAVKSMSNLQIKEEKVKPDTNGVIKTNATPEKTDEEEKEDRAAQSLLNKLIRSNLVDNTNQVEVLQRDPNSPLYSVKSFEELRLKPQLLQGVYAMGFNRPSKIQENALPMMLAEPPQNLIAQSQSGTGKTAAFVLAMLSRVEPAERYPQCLCLSPTYELALQTGKVIEQMGKFHPELKLAYAVRGNKLERGQKISEHIVIGTPGTVLDWCSKLKFIDPKKIKVFVLDEADVMIATQGHQDQSIRIQRMLPRNCQMLLFSATFEDSVWKFAQKVVPDPNIIKLKREEETLDTIKQYYVLCNSRDEKFQALCNIYGAITIAQAMIFCHTRKTASWLAAELSKEGHQVALLSGEMVVEQRAAVIERFREGKEKVLVTTNVCARGIDVEQVSVVINFDLPVDKDGNPDNETYLHRIGRTGRFGKRGLAVNMVDSKHSMNILNRIQEHFNKKIERLDTDDLDEIEKIAN.

The residue at position 2 (Ala2) is an N-acetylalanine. The N-terminal lobe stretch occupies residues 2–299 (ATDSWALAVD…DPNIIKLKRE (298 aa)). Lys26 is covalently cross-linked (Glycyl lysine isopeptide (Lys-Gly) (interchain with G-Cter in SUMO1); alternate). Residue Lys26 forms a Glycyl lysine isopeptide (Lys-Gly) (interchain with G-Cter in SUMO2); alternate linkage. Residues 31 to 55 (KPDTNGVIKTNATPEKTDEEEKEDR) form a disordered region. Residues 54 to 67 (DRAAQSLLNKLIRS) form an N-terminal helix region. The short motif at 91–119 (KSFEELRLKPQLLQGVYAMGFNRPSKIQE) is the Q motif element. ATP-binding positions include Gln118 and 137 to 144 (SQSGTGKT). A Helicase ATP-binding domain is found at 124 to 294 (MMLAEPPQNL…QKVVPDPNII (171 aa)). The DEAD box signature appears at 241–244 (DEAD). The C-terminal lobe stretch occupies residues 300 to 478 (EETLDTIKQY…DLDEIEKIAN (179 aa)). In terms of domain architecture, Helicase C-terminal spans 305 to 473 (TIKQYYVLCN…RLDTDDLDEI (169 aa)). The ATP site is built by Arg428 and Arg431.

It belongs to the DEAD box helicase family. DDX19/DBP5 subfamily.

The protein localises to the cytoplasm. The protein resides in the nucleus. Its subcellular location is the nucleoplasm. It catalyses the reaction ATP + H2O = ADP + phosphate + H(+). Functionally, ATP-dependent RNA helicase involved in mRNA export from the nucleus. Rather than unwinding RNA duplexes, DDX19 functions as a remodeler of ribonucleoprotein particles, whereby proteins bound to nuclear mRNA are dissociated and replaced by cytoplasmic mRNA binding proteins. The polypeptide is ATP-dependent RNA helicase DDX19A (DDX19A) (Bos taurus (Bovine)).